We begin with the raw amino-acid sequence, 340 residues long: Protein SSUH2 homolog (340 aa).

A compositionally biased stretch (acidic residues) spans 1–11 (MDRDPSEEDSM). The interval 1–20 (MDRDPSEEDSMADLSFEAES) is disordered.

In terms of tissue distribution, widely expressed, with highest levels in the liver, intestine, tongue and underjaw.

The protein localises to the cytoplasm. Its subcellular location is the nucleus. In terms of biological role, plays a role in odontogenesis. The chain is Protein SSUH2 homolog from Mus musculus (Mouse).